Here is a 55-residue protein sequence, read N- to C-terminus: uncharacterized protein (55 aa).

This is an uncharacterized protein from Tibrogargan virus (strain CS132) (TIBV).